The sequence spans 94 residues: Acylphosphatase (94 aa).

One can recognise an Acylphosphatase-like domain in the interval 3-90 (RVHVIVEGRV…PDEKQFRIMY (88 aa)). Catalysis depends on residues Arg-18 and Asn-36.

The protein belongs to the acylphosphatase family.

It carries out the reaction an acyl phosphate + H2O = a carboxylate + phosphate + H(+). This chain is Acylphosphatase (acyP), found in Geobacillus thermodenitrificans (strain NG80-2).